The following is a 245-amino-acid chain: MSQSTSVLRRNGFTFKQFFVAHDRCAMKVGTDGILLGAWAPVAGVKRCLDIGAGSGLLALMLAQRTSDSVIIDAVELESEAAAQAQENINQSPWAERINVHTADIQQWLTQQTVRFDLIISNPPYYQQGVECATPQREQARYTTTLDHPSLLTCAAECITEEGFFCVVLPEQVGNGFTELALSMGWHLRLRTDVAENEARLPHRVLLAFSPQAGECFSDRLVIRGPDQNYSEAYTALTQAFYLFM.

Belongs to the methyltransferase superfamily. tRNA (adenine-N(6)-)-methyltransferase family.

The protein localises to the cytoplasm. It catalyses the reaction adenosine(37) in tRNA1(Val) + S-adenosyl-L-methionine = N(6)-methyladenosine(37) in tRNA1(Val) + S-adenosyl-L-homocysteine + H(+). Specifically methylates the adenine in position 37 of tRNA(1)(Val) (anticodon cmo5UAC). The sequence is that of tRNA1(Val) (adenine(37)-N6)-methyltransferase from Shigella sonnei (strain Ss046).